The chain runs to 816 residues: Cation/H(+) antiporter 8 (816 aa).

12 helical membrane-spanning segments follow: residues 64–84, 97–117, 127–147, 163–183, 197–214, 227–247, 255–275, 297–317, 343–363, 382–402, 413–433, and 447–467; these read PKLE…NILF, MMLA…NSII, IDVA…LKGV, VTGV…FNLK, VMLL…ARLL, VALS…IANV, ADGL…FAVV, IHGV…LSQF, LESF…MLRT, FAVA…SVIV, SIIL…FYLF, and ILVL…GFLY.

The protein belongs to the monovalent cation:proton antiporter 2 (CPA2) transporter (TC 2.A.37) family. CHX (TC 2.A.37.4) subfamily. As to expression, specifically expressed in pollen.

It is found in the membrane. In terms of biological role, may operate as a cation/H(+) antiporter. The protein is Cation/H(+) antiporter 8 (CHX8) of Arabidopsis thaliana (Mouse-ear cress).